Consider the following 82-residue polypeptide: Sec-independent protein translocase protein TatA (82 aa).

Residues 1–21 traverse the membrane as a helical segment; that stretch reads MGGISIWQLLIIAVIIVLLFG. The interval 48–82 is disordered; the sequence is SAKDAKKDADFVPQNLEKKEAETVEKQKQNDKEQA.

This sequence belongs to the TatA/E family. As to quaternary structure, the Tat system comprises two distinct complexes: a TatABC complex, containing multiple copies of TatA, TatB and TatC subunits, and a separate TatA complex, containing only TatA subunits. Substrates initially bind to the TatABC complex, which probably triggers association of the separate TatA complex to form the active translocon.

The protein localises to the cell inner membrane. Its function is as follows. Part of the twin-arginine translocation (Tat) system that transports large folded proteins containing a characteristic twin-arginine motif in their signal peptide across membranes. TatA could form the protein-conducting channel of the Tat system. In Aliivibrio salmonicida (strain LFI1238) (Vibrio salmonicida (strain LFI1238)), this protein is Sec-independent protein translocase protein TatA.